The chain runs to 455 residues: Kynurenine 3-monooxygenase (455 aa).

The protein belongs to the aromatic-ring hydroxylase family. KMO subfamily. FAD serves as cofactor.

It carries out the reaction L-kynurenine + NADPH + O2 + H(+) = 3-hydroxy-L-kynurenine + NADP(+) + H2O. Its pathway is cofactor biosynthesis; NAD(+) biosynthesis; quinolinate from L-kynurenine: step 1/3. Its function is as follows. Catalyzes the hydroxylation of L-kynurenine (L-Kyn) to form 3-hydroxy-L-kynurenine (L-3OHKyn). Required for synthesis of quinolinic acid. This is Kynurenine 3-monooxygenase from Xanthomonas oryzae pv. oryzae (strain KACC10331 / KXO85).